A 229-amino-acid polypeptide reads, in one-letter code: MLHLVDYALLKPYLTLEEVARGARRAEELGVAAYCVNPLYAPYVRELLSRVKLCVVADFPFGAMPTAARAALVARIAEYAEEIDVVAPIGLVKSHMWGEVRRDLLSVVGAAGGRVVKVIVEEPYLTDEERHRLYDIVAESGAHFIKSSTGFAEEAYARQLGNPTYSTPERAAAIARYIRERGFRLGVKMAGGIRTAEQAKAIIDAIGFGTDPTKVRLGTSTPEALRTLG.

The active-site Proton donor/acceptor is Asp84. The active-site Schiff-base intermediate with acetaldehyde is the Lys146. Lys188 functions as the Proton donor/acceptor in the catalytic mechanism.

Belongs to the DeoC/FbaB aldolase family. DeoC type 1 subfamily.

The protein localises to the cytoplasm. It catalyses the reaction 2-deoxy-D-ribose 5-phosphate = D-glyceraldehyde 3-phosphate + acetaldehyde. Its pathway is carbohydrate degradation; 2-deoxy-D-ribose 1-phosphate degradation; D-glyceraldehyde 3-phosphate and acetaldehyde from 2-deoxy-alpha-D-ribose 1-phosphate: step 2/2. Catalyzes a reversible aldol reaction between acetaldehyde and D-glyceraldehyde 3-phosphate to generate 2-deoxy-D-ribose 5-phosphate. In Pyrobaculum neutrophilum (strain DSM 2338 / JCM 9278 / NBRC 100436 / V24Sta) (Thermoproteus neutrophilus), this protein is Deoxyribose-phosphate aldolase.